The primary structure comprises 109 residues: SRA stem-loop-interacting RNA-binding protein, mitochondrial (109 aa).

At Ser-15 the chain carries Phosphoserine. In terms of domain architecture, RRM spans Pro-19–Asp-103. At Thr-101 the chain carries Phosphothreonine. Ser-102 is modified (phosphoserine).

Ubiquitously expressed, with highest level in heart, liver, skeletal muscle and testis.

It is found in the mitochondrion. Its subcellular location is the nucleus. RNA-binding protein that acts as a nuclear receptor corepressor. Probably acts by binding the SRA RNA, and repressing the SRA-mediated nuclear receptor coactivation. Binds the STR7 loop of SRA RNA. Also able to repress glucocorticoid (GR), androgen (AR), thyroid (TR) and VDR-mediated transactivation. In Homo sapiens (Human), this protein is SRA stem-loop-interacting RNA-binding protein, mitochondrial (SLIRP).